A 379-amino-acid polypeptide reads, in one-letter code: Glutamate 5-kinase (379 aa).

ATP is bound at residue lysine 15. Serine 54, aspartate 144, and asparagine 156 together coordinate substrate. 176–177 (TD) serves as a coordination point for ATP. The PUA domain maps to 282-360 (KGVILVDAGA…GEIERALGYK (79 aa)).

The protein belongs to the glutamate 5-kinase family.

It localises to the cytoplasm. The catalysed reaction is L-glutamate + ATP = L-glutamyl 5-phosphate + ADP. Its pathway is amino-acid biosynthesis; L-proline biosynthesis; L-glutamate 5-semialdehyde from L-glutamate: step 1/2. Catalyzes the transfer of a phosphate group to glutamate to form L-glutamate 5-phosphate. In Anaeromyxobacter dehalogenans (strain 2CP-C), this protein is Glutamate 5-kinase.